The following is a 229-amino-acid chain: MAKLVLVRHGKSEWNKQNRFTGWVDVDLAPEGIEEAKKAGQKLKEAGFCFDICFSSYLKRAIKTGIIILEELDLLFIDHLKDWRFNERHYGALTGLNKDEVKAEVGEEKFLLYRRSYDVPPPPLSEDDKRHPRFDPHYKNFPVELLPNTESLKDNQIRAMAAFHERVAPLLVEGKDVLITAHGNTIRGMVKELDGISDEDIPKFEIATGIPRVYEFDEALHIKNVYNID.

Substrate-binding positions include 8–15, 21–22, arginine 60, 87–90, lysine 98, 114–115, and 183–184; these read RHGKSEWN, TG, ERHY, RR, and GN. The active-site Tele-phosphohistidine intermediate is histidine 9. Residue glutamate 87 is the Proton donor/acceptor of the active site.

It belongs to the phosphoglycerate mutase family. BPG-dependent PGAM subfamily. In terms of assembly, homodimer.

The catalysed reaction is (2R)-2-phosphoglycerate = (2R)-3-phosphoglycerate. It participates in carbohydrate degradation; glycolysis; pyruvate from D-glyceraldehyde 3-phosphate: step 3/5. In terms of biological role, catalyzes the interconversion of 2-phosphoglycerate and 3-phosphoglycerate. In Nautilia profundicola (strain ATCC BAA-1463 / DSM 18972 / AmH), this protein is 2,3-bisphosphoglycerate-dependent phosphoglycerate mutase.